Reading from the N-terminus, the 174-residue chain is Ribulose bisphosphate carboxylase small subunit, chloroplastic (174 aa).

A chloroplast-targeting transit peptide spans 1–45 (MAPTVMASSATSVAPFQGLKSTAGLPVSRRSNASSASVSNGGRIR).

It belongs to the RuBisCO small chain family. In terms of assembly, heterohexadecamer of 8 large and 8 small subunits.

The protein resides in the plastid. It is found in the chloroplast. In terms of biological role, ruBisCO catalyzes two reactions: the carboxylation of D-ribulose 1,5-bisphosphate, the primary event in carbon dioxide fixation, as well as the oxidative fragmentation of the pentose substrate. Both reactions occur simultaneously and in competition at the same active site. Although the small subunit is not catalytic it is essential for maximal activity. The polypeptide is Ribulose bisphosphate carboxylase small subunit, chloroplastic (Hordeum vulgare (Barley)).